The following is a 566-amino-acid chain: Mucolipin-2 (566 aa).

Over 1–65 the chain is Cytoplasmic; the sequence is MARQPYRFPQ…YRARRQIPWK (65 aa). The chain crosses the membrane as a helical span at residues 66–86; it reads LGLQILKIVMVTTQLVRFGLS. At 87–288 the chain is on the extracellular side; it reads NQLVVAFKED…IFGSTQKNAQ (202 aa). Positions 107–123 are extracellular/lumenal pore loop; the sequence is KGYSGTDEDDYSCSVYT. Intrachain disulfides connect Cys-164–Cys-190 and Cys-243–Cys-274. Residues 289–309 traverse the membrane as a helical segment; it reads YVLVFDAFVIVICLASLILCT. The Cytoplasmic portion of the chain corresponds to 310 to 346; it reads RSIVLALRLRKRFLNFFLEKYKRPVCDTDQWEFINGW. The helical transmembrane segment at 347–367 threads the bilayer; it reads YVLVIISDLMTIIGSILKMEI. The Extracellular segment spans residues 368-376; it reads KAKNLTNYD. A helical transmembrane segment spans residues 377–397; the sequence is LCSIFLGTSTLLVWVGVIRYL. Topologically, residues 398–419 are cytoplasmic; the sequence is GYFQAYNVLILTMQASLPKVLR. The chain crosses the membrane as a helical span at residues 420–440; it reads FCACAGMIYLGYTFCGWIVLG. Topologically, residues 441–448 are extracellular; sequence PYHDKFEN. The segment at residues 449–469 is an intramembrane region (pore-forming); it reads LNTVAECLFSLVNGDDMFATF. Residues 461 to 464 carry the Selectivity filter motif; sequence NGDD. The Extracellular segment spans residues 470–480; sequence AQIQQKSILVW. Residues 481-502 traverse the membrane as a helical segment; it reads LFSRLYLYSFISLFIYMILSLF. Residues 503 to 566 are Cytoplasmic-facing; sequence IALITDSYDT…RSDDHLIPIS (64 aa).

This sequence belongs to the transient receptor (TC 1.A.4) family. Polycystin subfamily. MCOLN2 sub-subfamily. Forms homooligomeric complexes; probably tetrameric. Can heterooligomerize with MCOLN1; heteromeric assemblies have different channel properties as compared to the respective homooligomers and may be tissue-specific. Interacts with TMEM176A.

It is found in the cell membrane. Its subcellular location is the late endosome membrane. The protein resides in the lysosome membrane. It localises to the recycling endosome membrane. The enzyme catalyses Ca(2+)(in) = Ca(2+)(out). The catalysed reaction is Fe(2+)(in) = Fe(2+)(out). With respect to regulation, channel activity is reduced by low extracellular/lumenal pH level. Nonselective cation channel probably playing a role in the regulation of membrane trafficking events. Acts as a Ca(2+)-permeable cation channel with inwardly rectifying activity. May activate ARF6 and be involved in the trafficking of GPI-anchored cargo proteins to the cell surface via the ARF6-regulated recycling pathway. May play a role in immune processes. In adaptive immunity, TRPML2 and TRPML1 may play redundant roles in the function of the specialized lysosomes of B cells. In the innate immune response, may play a role in the regulation of chemokine secretion and macrophage migration. Through a possible and probably tissue-specific heteromerization with MCOLN1 may be at least in part involved in many lysosome-dependent cellular events. Also functions as a Fe(2+) permeable channel. The protein is Mucolipin-2 of Homo sapiens (Human).